A 133-amino-acid chain; its full sequence is Nodulation protein K (133 aa).

The polypeptide is Nodulation protein K (nodK) (Bradyrhizobium elkanii).